Here is a 479-residue protein sequence, read N- to C-terminus: UDP-N-acetylmuramoyl-L-alanyl-D-glutamate--2,6-diaminopimelate ligase (479 aa).

Residue Ser-21 coordinates UDP-N-acetyl-alpha-D-muramoyl-L-alanyl-D-glutamate. ATP is bound at residue Gly-98 to Ser-104. Residues Thr-144–Thr-145, Ser-171, Gln-177, and Arg-179 each bind UDP-N-acetyl-alpha-D-muramoyl-L-alanyl-D-glutamate. The residue at position 211 (Lys-211) is an N6-carboxylysine. Meso-2,6-diaminopimelate is bound by residues Arg-372, Asp-396–Arg-399, Gly-446, and Glu-450. Positions Asp-396–Arg-399 match the Meso-diaminopimelate recognition motif motif.

Belongs to the MurCDEF family. MurE subfamily. Mg(2+) serves as cofactor. In terms of processing, carboxylation is probably crucial for Mg(2+) binding and, consequently, for the gamma-phosphate positioning of ATP.

It localises to the cytoplasm. It carries out the reaction UDP-N-acetyl-alpha-D-muramoyl-L-alanyl-D-glutamate + meso-2,6-diaminopimelate + ATP = UDP-N-acetyl-alpha-D-muramoyl-L-alanyl-gamma-D-glutamyl-meso-2,6-diaminopimelate + ADP + phosphate + H(+). It functions in the pathway cell wall biogenesis; peptidoglycan biosynthesis. In terms of biological role, catalyzes the addition of meso-diaminopimelic acid to the nucleotide precursor UDP-N-acetylmuramoyl-L-alanyl-D-glutamate (UMAG) in the biosynthesis of bacterial cell-wall peptidoglycan. This chain is UDP-N-acetylmuramoyl-L-alanyl-D-glutamate--2,6-diaminopimelate ligase, found in Rickettsia montanensis.